Consider the following 273-residue polypeptide: Large ribosomal subunit protein uL2 (273 aa).

The segment at 228 to 273 (VDHPHGGGEGKTSGGRHPVTPWGFPTKGKKTRKNKRTSKFIIKKRK) is disordered. Positions 254 to 273 (KGKKTRKNKRTSKFIIKKRK) are enriched in basic residues.

It belongs to the universal ribosomal protein uL2 family. In terms of assembly, part of the 50S ribosomal subunit. Forms a bridge to the 30S subunit in the 70S ribosome.

Its function is as follows. One of the primary rRNA binding proteins. Required for association of the 30S and 50S subunits to form the 70S ribosome, for tRNA binding and peptide bond formation. It has been suggested to have peptidyltransferase activity; this is somewhat controversial. Makes several contacts with the 16S rRNA in the 70S ribosome. In Rickettsia bellii (strain OSU 85-389), this protein is Large ribosomal subunit protein uL2.